Here is a 393-residue protein sequence, read N- to C-terminus: 4-hydroxyphenylpyruvate dioxygenase (393 aa).

N-acetylthreonine is present on T2. VOC domains follow at residues 18-149 (HFHS…LVEK) and 180-338 (MIDH…IFTK). K132 bears the N6-succinyllysine mark. H183 contributes to the Fe cation binding site. Phosphoserine occurs at positions 211, 226, and 250. H266 and E349 together coordinate Fe cation.

The protein belongs to the 4HPPD family. In terms of assembly, homodimer. It depends on Fe cation as a cofactor.

The protein localises to the cytoplasm. The protein resides in the endoplasmic reticulum membrane. It localises to the golgi apparatus membrane. The catalysed reaction is 3-(4-hydroxyphenyl)pyruvate + O2 = homogentisate + CO2. It functions in the pathway amino-acid degradation; L-phenylalanine degradation; acetoacetate and fumarate from L-phenylalanine: step 3/6. In terms of biological role, catalyzes the conversion of 4-hydroxyphenylpyruvic acid to homogentisic acid, one of the steps in tyrosine catabolism. This chain is 4-hydroxyphenylpyruvate dioxygenase (HPD), found in Homo sapiens (Human).